The primary structure comprises 83 residues: Probable insulin-like peptide alpha-type 2 (83 aa).

An N-terminal signal peptide occupies residues 1–21; the sequence is MHTTTILICFFIFLVQVSTMD. 3 disulfides stabilise this stretch: Cys-32–Cys-66, Cys-44–Cys-79, and Cys-54–Cys-80.

Belongs to the insulin family.

The protein localises to the secreted. The sequence is that of Probable insulin-like peptide alpha-type 2 (ins-22) from Caenorhabditis elegans.